A 1401-amino-acid chain; its full sequence is DNA-directed RNA polymerase subunit beta' (1401 aa).

Cys-71, Cys-73, Cys-86, and Cys-89 together coordinate Zn(2+). Asp-462, Asp-464, and Asp-466 together coordinate Mg(2+). Zn(2+)-binding residues include Cys-810, Cys-884, Cys-891, and Cys-894. Residues 1377–1401 are disordered; sequence RRKGTGAESATPMLADMANDPAAAE.

The protein belongs to the RNA polymerase beta' chain family. The RNAP catalytic core consists of 2 alpha, 1 beta, 1 beta' and 1 omega subunit. When a sigma factor is associated with the core the holoenzyme is formed, which can initiate transcription. Mg(2+) serves as cofactor. Requires Zn(2+) as cofactor.

The enzyme catalyses RNA(n) + a ribonucleoside 5'-triphosphate = RNA(n+1) + diphosphate. Functionally, DNA-dependent RNA polymerase catalyzes the transcription of DNA into RNA using the four ribonucleoside triphosphates as substrates. The polypeptide is DNA-directed RNA polymerase subunit beta' (Rhizobium meliloti (strain 1021) (Ensifer meliloti)).